A 325-amino-acid chain; its full sequence is DNA-directed RNA polymerase subunit alpha (325 aa).

The interval 1–231 is alpha N-terminal domain (alpha-NTD); that stretch reads MQTSLLKPKI…DQLSVFAALE (231 aa). The tract at residues 246-325 is alpha C-terminal domain (alpha-CTD); that stretch reads IDPILLRPVD…ENWPPAGLDK (80 aa).

Belongs to the RNA polymerase alpha chain family. As to quaternary structure, homodimer. The RNAP catalytic core consists of 2 alpha, 1 beta, 1 beta' and 1 omega subunit. When a sigma factor is associated with the core the holoenzyme is formed, which can initiate transcription.

It catalyses the reaction RNA(n) + a ribonucleoside 5'-triphosphate = RNA(n+1) + diphosphate. Functionally, DNA-dependent RNA polymerase catalyzes the transcription of DNA into RNA using the four ribonucleoside triphosphates as substrates. The sequence is that of DNA-directed RNA polymerase subunit alpha from Burkholderia multivorans (strain ATCC 17616 / 249).